Reading from the N-terminus, the 421-residue chain is Trimethyllysine dioxygenase, mitochondrial (421 aa).

The transit peptide at Met1–Asn15 directs the protein to the mitochondrion. Residues Lys179 and Lys236 each carry the N6-acetyllysine modification. Fe cation-binding residues include His242, Asp244, and His389.

Belongs to the gamma-BBH/TMLD family. In terms of assembly, homodimer. Fe(2+) serves as cofactor. It depends on L-ascorbate as a cofactor.

The protein resides in the mitochondrion matrix. It carries out the reaction N(6),N(6),N(6)-trimethyl-L-lysine + 2-oxoglutarate + O2 = (3S)-3-hydroxy-N(6),N(6),N(6)-trimethyl-L-lysine + succinate + CO2. It participates in amine and polyamine biosynthesis; carnitine biosynthesis. Its function is as follows. Converts trimethyllysine (TML) into hydroxytrimethyllysine (HTML). This Rattus norvegicus (Rat) protein is Trimethyllysine dioxygenase, mitochondrial (Tmlhe).